We begin with the raw amino-acid sequence, 489 residues long: Putative (R)-citramalate synthase CimA (489 aa).

Residues 3-255 form the Pyruvate carboxyltransferase domain; that stretch reads VKILDTTLRD…KTKIKKERLY (253 aa).

It belongs to the alpha-IPM synthase/homocitrate synthase family. As to quaternary structure, homodimer.

It carries out the reaction pyruvate + acetyl-CoA + H2O = (3R)-citramalate + CoA + H(+). Its pathway is amino-acid biosynthesis; L-isoleucine biosynthesis; 2-oxobutanoate from pyruvate: step 1/3. In terms of biological role, catalyzes the condensation of pyruvate and acetyl-coenzyme A to form (R)-citramalate. This Archaeoglobus fulgidus (strain ATCC 49558 / DSM 4304 / JCM 9628 / NBRC 100126 / VC-16) protein is Putative (R)-citramalate synthase CimA (cimA).